The chain runs to 431 residues: UDP-N-acetylglucosamine 1-carboxyvinyltransferase (431 aa).

22 to 23 (KN) contacts phosphoenolpyruvate. Arg102 serves as a coordination point for UDP-N-acetyl-alpha-D-glucosamine. Cys126 functions as the Proton donor in the catalytic mechanism. Position 126 is a 2-(S-cysteinyl)pyruvic acid O-phosphothioketal (Cys126). UDP-N-acetyl-alpha-D-glucosamine is bound by residues Asp318 and Ile340.

It belongs to the EPSP synthase family. MurA subfamily.

Its subcellular location is the cytoplasm. It carries out the reaction phosphoenolpyruvate + UDP-N-acetyl-alpha-D-glucosamine = UDP-N-acetyl-3-O-(1-carboxyvinyl)-alpha-D-glucosamine + phosphate. Its pathway is cell wall biogenesis; peptidoglycan biosynthesis. In terms of biological role, cell wall formation. Adds enolpyruvyl to UDP-N-acetylglucosamine. This is UDP-N-acetylglucosamine 1-carboxyvinyltransferase from Bartonella quintana (strain Toulouse) (Rochalimaea quintana).